We begin with the raw amino-acid sequence, 378 residues long: Alcohol dehydrogenase 1 (378 aa).

A Zn(2+)-binding site is contributed by C48. Residue 49-53 (HTDVL) participates in NAD(+) binding. Zn(2+) contacts are provided by H69, C99, C102, C105, C113, and C177. NAD(+)-binding positions include 202 to 207 (GIGTVG), D226, K231, 274 to 276 (TGV), 297 to 299 (IGA), and 321 to 323 (TAF).

The protein belongs to the zinc-containing alcohol dehydrogenase family. Class-IV subfamily. In terms of assembly, homodimer. Requires Zn(2+) as cofactor. As to expression, present in non-glandular trichome cells.

The protein localises to the nucleus. It is found in the cytoplasm. Its subcellular location is the cytosol. It carries out the reaction (+)-artemisinic alcohol + NAD(+) = (+)-artemisinic aldehyde + NADH + H(+). The protein operates within sesquiterpene biosynthesis. In terms of biological role, involved in the biosynthesis of the antimalarial endoperoxide artemisinin. Catalyzes the conversion of artemisinic alcohol into artemisinic aldehyde. The chain is Alcohol dehydrogenase 1 from Artemisia annua (Sweet wormwood).